An 83-amino-acid polypeptide reads, in one-letter code: Small ribosomal subunit protein bS16 (83 aa).

The protein belongs to the bacterial ribosomal protein bS16 family.

This is Small ribosomal subunit protein bS16 from Borrelia turicatae (strain 91E135).